The sequence spans 402 residues: tRNA(Met) cytidine acetate ligase (402 aa).

ATP contacts are provided by residues 7–20 (IAEYNPMHNGHIHH), Gly102, Asn171, and Arg196.

The protein belongs to the TmcAL family.

The protein localises to the cytoplasm. It catalyses the reaction cytidine(34) in elongator tRNA(Met) + acetate + ATP = N(4)-acetylcytidine(34) in elongator tRNA(Met) + AMP + diphosphate. Catalyzes the formation of N(4)-acetylcytidine (ac(4)C) at the wobble position of elongator tRNA(Met), using acetate and ATP as substrates. First activates an acetate ion to form acetyladenylate (Ac-AMP) and then transfers the acetyl group to tRNA to form ac(4)C34. The polypeptide is tRNA(Met) cytidine acetate ligase (Clostridium acetobutylicum (strain ATCC 824 / DSM 792 / JCM 1419 / IAM 19013 / LMG 5710 / NBRC 13948 / NRRL B-527 / VKM B-1787 / 2291 / W)).